Reading from the N-terminus, the 2449-residue chain is Nonribisomal peptide synthetase phqB (2449 aa).

The interval 253–654 (IQVHSGPGRL…GRRDTVVKIR (402 aa)) is adenylation 1. Residues 795-870 (LPMTPNEDVL…LRTVAKEARP (76 aa)) enclose the Carrier 1 domain. Ser-815 carries the O-(pantetheine 4'-phosphoryl)serine modification. The segment at 913–1337 (QDIYPTTPLQ…LISDRDSELL (425 aa)) is condensation 1. The tract at residues 1357 to 1756 (EAQVTRNPSK…TFTFLGRTNQ (400 aa)) is adenylation 2. The Carrier 2 domain occupies 1915–1993 (WALSKHIGQL…MVAEMIDRTP (79 aa)). Position 1952 is an O-(pantetheine 4'-phosphoryl)serine (Ser-1952). Residues 2041–2297 (LTGATGFLGT…VAAVDWVASL (257 aa)) form a reductase (R) domain region. Residues Thr-2045, Met-2249, and Asn-2259 each contribute to the NADPH site.

The protein belongs to the NRP synthetase family.

The protein operates within alkaloid biosynthesis. Functionally, nonribisomal peptide synthetase; part of the gene cluster that mediates the biosynthesis of paraherquamide, a fungal indole alkaloid that belongs to a family of natural products containing a characteristic bicyclo[2.2.2]diazaoctane core. The first steps in the biosynthesis of paraherquamide is the production of the beta-methyl-proline precursor from L-isoleucine. They require oxidation of a terminally hydroxylated L-isoleucine to the corresponding aldehyde by enzymes which have still to be identified. Spontaneous cyclization and dehydration would yield the 4-methyl pyrolline-5-carboxylic acid, which is then reduced by the pyrroline-5-carboxylate reductase phqD leading to the beta-methyl-proline precursor. The next step of paraherquamide biosynthesis involves coupling of beta-methyl-proline and L-tryptophan by the bimodular NRPS phqB, to produce a monooxopiperazine intermediate. The reductase (R) domain of phqB utilizes NADPH for hydride transfer to reduce the thioester bond of the T domain-tethered linear dipeptide to a hemithioaminal intermediate, which spontaneously cleaves the C-S bond to release the aldehyde product. This compound undergoes spontaneous cyclization and dehydration to give a dienamine which is reverse prenylated at C-2 by the reverse prenyltransferase phqJ. The other prenyltransferase present in the cluster, phqI may be a redundant gene in the pathway. During biosynthetic assembly, the key step to produce the polycyclic core is catalyzed by the bifunctional reductase and intramolecular [4+2] Diels-Alderase, phqE, resulting in formation of the [2.2.2] diazaoctane intermediate preparaherquamide. Following formation of preparaherquamide, an indole 2,3-epoxidation-initiated pinacol-like rearrangement is catalyzed by the phqK FAD-dependent monooxygenase. The prenyltransferase phqA, the cytochrome P450 monooxygenase phqL, and the FAD-linked oxidoreductase phqH (or the cytochrome P450 monooxygenase phqM), are proposed to be involved in the formation of the pyran ring. The FAD-dependent monooxygenase phqK is likely responsible for generation of the spiro-oxindole, and the N-methylation is likely mediated by the phqN methyltransferase leading to the isolable natural product paraherquamide F. However, the order of these biosynthetic steps has still to be determined. In late-stage paraherquamide biosynthesis, the third P450 monooxygenase, phqO, is probably responsible for the C-14 hydroxylation, transforming paraherquamide F to paraherquamide G, and paraherquamide E to the final product paraherquamide A. The expansion from the 6-membered ring pyran (in paraherquamides F and G) to the 7-membered dioxepin ring (in paraherquamides A and E) represents a poorly understood but intriguing process that probably involves the 2-oxoglutarate-dependent dioxygenase phqC. Finally, the remaining members of the paraherquamide cluster, including phqI as well as phqM (or phqH), do not have a clearly prescribed role and appear to be redundant. The sequence is that of Nonribisomal peptide synthetase phqB from Penicillium fellutanum.